A 426-amino-acid polypeptide reads, in one-letter code: Serine--tRNA ligase (426 aa).

233 to 235 lines the L-serine pocket; the sequence is TSE. ATP is bound at residue 264 to 266; the sequence is RSE. E287 contributes to the L-serine binding site. 351–354 contributes to the ATP binding site; sequence EISS. Residue S387 coordinates L-serine.

This sequence belongs to the class-II aminoacyl-tRNA synthetase family. Type-1 seryl-tRNA synthetase subfamily. In terms of assembly, homodimer. The tRNA molecule binds across the dimer.

It is found in the cytoplasm. It carries out the reaction tRNA(Ser) + L-serine + ATP = L-seryl-tRNA(Ser) + AMP + diphosphate + H(+). It catalyses the reaction tRNA(Sec) + L-serine + ATP = L-seryl-tRNA(Sec) + AMP + diphosphate + H(+). Its pathway is aminoacyl-tRNA biosynthesis; selenocysteinyl-tRNA(Sec) biosynthesis; L-seryl-tRNA(Sec) from L-serine and tRNA(Sec): step 1/1. Its function is as follows. Catalyzes the attachment of serine to tRNA(Ser). Is also able to aminoacylate tRNA(Sec) with serine, to form the misacylated tRNA L-seryl-tRNA(Sec), which will be further converted into selenocysteinyl-tRNA(Sec). The chain is Serine--tRNA ligase from Xylella fastidiosa (strain M12).